The primary structure comprises 364 residues: N-acetyl-gamma-glutamyl-phosphate reductase (364 aa).

C157 is a catalytic residue.

This sequence belongs to the NAGSA dehydrogenase family. Type 1 subfamily.

It is found in the cytoplasm. It carries out the reaction N-acetyl-L-glutamate 5-semialdehyde + phosphate + NADP(+) = N-acetyl-L-glutamyl 5-phosphate + NADPH + H(+). Its pathway is amino-acid biosynthesis; L-arginine biosynthesis; N(2)-acetyl-L-ornithine from L-glutamate: step 3/4. In terms of biological role, catalyzes the NADPH-dependent reduction of N-acetyl-5-glutamyl phosphate to yield N-acetyl-L-glutamate 5-semialdehyde. The polypeptide is N-acetyl-gamma-glutamyl-phosphate reductase (Bifidobacterium longum (strain DJO10A)).